Here is a 222-residue protein sequence, read N- to C-terminus: Peptide methionine sulfoxide reductase MsrA (222 aa).

The active site involves Cys-60.

This sequence belongs to the MsrA Met sulfoxide reductase family.

It catalyses the reaction L-methionyl-[protein] + [thioredoxin]-disulfide + H2O = L-methionyl-(S)-S-oxide-[protein] + [thioredoxin]-dithiol. The catalysed reaction is [thioredoxin]-disulfide + L-methionine + H2O = L-methionine (S)-S-oxide + [thioredoxin]-dithiol. Its function is as follows. Has an important function as a repair enzyme for proteins that have been inactivated by oxidation. Catalyzes the reversible oxidation-reduction of methionine sulfoxide in proteins to methionine. The sequence is that of Peptide methionine sulfoxide reductase MsrA from Pseudomonas putida (strain GB-1).